The primary structure comprises 456 residues: tRNA modification GTPase MnmE (456 aa).

(6S)-5-formyl-5,6,7,8-tetrahydrofolate contacts are provided by Arg23, Glu85, and Arg124. The 157-residue stretch at 220-376 (GVAVLIAGKP…LKESIFQTFI (157 aa)) folds into the TrmE-type G domain. Position 230 (Asn230) interacts with K(+). Residues 230-235 (NVGKSS), 249-255 (TSVPGTT), and 274-277 (DTAG) each bind GTP. Ser234 lines the Mg(2+) pocket. Residues Thr249, Val251, and Thr254 each contribute to the K(+) site. Position 255 (Thr255) interacts with Mg(2+). Lys456 is a (6S)-5-formyl-5,6,7,8-tetrahydrofolate binding site.

Belongs to the TRAFAC class TrmE-Era-EngA-EngB-Septin-like GTPase superfamily. TrmE GTPase family. Homodimer. Heterotetramer of two MnmE and two MnmG subunits. The cofactor is K(+).

It localises to the cytoplasm. Functionally, exhibits a very high intrinsic GTPase hydrolysis rate. Involved in the addition of a carboxymethylaminomethyl (cmnm) group at the wobble position (U34) of certain tRNAs, forming tRNA-cmnm(5)s(2)U34. The polypeptide is tRNA modification GTPase MnmE (Geobacter sulfurreducens (strain ATCC 51573 / DSM 12127 / PCA)).